The following is a 317-amino-acid chain: Tegument protein UL14 homolog (317 aa).

The interval 166-291 (IAADPHSPRS…QKWLGGIPPL (126 aa)) is disordered. Over residues 182-195 (KAPEDARCGARKPG) the composition is skewed to basic and acidic residues. Over residues 198–211 (NNYTPSAQPRSQET) the composition is skewed to polar residues. 2 stretches are compositionally biased toward basic and acidic residues: residues 217-236 (ASPDEGTRLGDRTRDLEHHS) and 249-265 (SERRRLGVVHQREKSSE).

Belongs to the alphaherpesvirinae HHV-1 UL14 protein family.

It localises to the virion tegument. The protein localises to the host cytoplasm. The protein resides in the host nucleus. In terms of biological role, contributes to the nuclear transport of the viral transcriptional activator VP16 during the early phase of infection. Therefore, participates indirectly in the regulation of the immediate-early gene expression. Additionally, seems to be important for efficient nuclear targeting of capsids. This chain is Tegument protein UL14 homolog, found in Equus caballus (Horse).